We begin with the raw amino-acid sequence, 187 residues long: Protein GrpE (187 aa).

The disordered stretch occupies residues 1 to 38 (MSEEKQTVEQNETEEQEIIEEQAAADEQQEETNESELL). The span at 11–34 (NETEEQEIIEEQAAADEQQEETNE) shows a compositional bias: acidic residues.

This sequence belongs to the GrpE family. As to quaternary structure, homodimer.

The protein resides in the cytoplasm. Participates actively in the response to hyperosmotic and heat shock by preventing the aggregation of stress-denatured proteins, in association with DnaK and GrpE. It is the nucleotide exchange factor for DnaK and may function as a thermosensor. Unfolded proteins bind initially to DnaJ; upon interaction with the DnaJ-bound protein, DnaK hydrolyzes its bound ATP, resulting in the formation of a stable complex. GrpE releases ADP from DnaK; ATP binding to DnaK triggers the release of the substrate protein, thus completing the reaction cycle. Several rounds of ATP-dependent interactions between DnaJ, DnaK and GrpE are required for fully efficient folding. This Bacillus subtilis (strain 168) protein is Protein GrpE.